We begin with the raw amino-acid sequence, 609 residues long: Glutamine--fructose-6-phosphate aminotransferase [isomerizing] (609 aa).

The active-site Nucleophile; for GATase activity is the C2. One can recognise a Glutamine amidotransferase type-2 domain in the interval 2–219; sequence CGIVGYIGGR…DGECARLTRD (218 aa). 2 consecutive SIS domains span residues 285–424 and 458–599; these read SSDL…LRGT and LARE…VDQP. The active-site For Fru-6P isomerization activity is the K604.

In terms of assembly, homodimer.

It localises to the cytoplasm. It catalyses the reaction D-fructose 6-phosphate + L-glutamine = D-glucosamine 6-phosphate + L-glutamate. Functionally, catalyzes the first step in hexosamine metabolism, converting fructose-6P into glucosamine-6P using glutamine as a nitrogen source. The sequence is that of Glutamine--fructose-6-phosphate aminotransferase [isomerizing] from Gloeobacter violaceus (strain ATCC 29082 / PCC 7421).